Here is a 551-residue protein sequence, read N- to C-terminus: Rqc2 homolog RqcH (551 aa).

Belongs to the NEMF family. As to quaternary structure, associates with stalled 50S ribosomal subunits, binds to RqcP. Interacts with human fibronectin.

The protein localises to the secreted. The protein resides in the capsule. It localises to the cell surface. Its subcellular location is the cytoplasm. In terms of biological role, key component of the ribosome quality control system (RQC), a ribosome-associated complex that mediates the extraction of incompletely synthesized nascent chains from stalled ribosomes and their subsequent degradation. RqcH recruits Ala-charged tRNA, and with RqcP directs the elongation of stalled nascent chains on 50S ribosomal subunits, leading to non-templated C-terminal alanine extensions (Ala tail). The Ala tail promotes nascent chain degradation. May add between 1 and at least 8 Ala residues. Binds to stalled 50S ribosomal subunits. Plays a significant role in virulence. Recombinant protein binds to immobilized human fibronectin; binding is saturable and competed by heparin. Purified protein inhibits binding of whole cells to fibronectin. The chain is Rqc2 homolog RqcH from Streptococcus pneumoniae serotype 2 (strain D39 / NCTC 7466).